Here is a 147-residue protein sequence, read N- to C-terminus: D-aminoacyl-tRNA deacylase (147 aa).

The Gly-cisPro motif, important for rejection of L-amino acids motif lies at Gly-136–Pro-137.

Belongs to the DTD family. Homodimer.

The protein localises to the cytoplasm. The catalysed reaction is glycyl-tRNA(Ala) + H2O = tRNA(Ala) + glycine + H(+). It catalyses the reaction a D-aminoacyl-tRNA + H2O = a tRNA + a D-alpha-amino acid + H(+). Its function is as follows. An aminoacyl-tRNA editing enzyme that deacylates mischarged D-aminoacyl-tRNAs. Also deacylates mischarged glycyl-tRNA(Ala), protecting cells against glycine mischarging by AlaRS. Acts via tRNA-based rather than protein-based catalysis; rejects L-amino acids rather than detecting D-amino acids in the active site. By recycling D-aminoacyl-tRNA to D-amino acids and free tRNA molecules, this enzyme counteracts the toxicity associated with the formation of D-aminoacyl-tRNA entities in vivo and helps enforce protein L-homochirality. This chain is D-aminoacyl-tRNA deacylase, found in Sulfurihydrogenibium sp. (strain YO3AOP1).